Consider the following 917-residue polypeptide: Hexokinase-1 (917 aa).

Methionine 1 is subject to N-acetylmethionine. Positions 1–10 (MIAAQLLAYY) are mitochondrial-binding peptide (MBP). Hexokinase domains follow at residues 16–458 (DDQV…MVTA) and 464–906 (AEQH…LITA). Residues arginine 30 and 84–89 (DLGGSS) contribute to the ATP site. Residues 73–207 (DGSEKGDFIA…DYDANIVAVV (135 aa)) are hexokinase small subdomain 1. 84–91 (DLGGSSFR) contacts D-glucose 6-phosphate. Residues serine 155, 172-173 (TK), and 208-209 (ND) each bind D-glucose. Residues 208–447 (NDTVGTMMTC…SDVRFLLSES (240 aa)) form a hexokinase large subdomain 1 region. D-glucose 6-phosphate contacts are provided by aspartate 209 and threonine 232. D-glucose is bound by residues asparagine 235, glutamate 260, and 291-294 (QLFE). At serine 337 the chain carries Phosphoserine. Residue asparagine 345 coordinates ATP. 413 to 415 (DGS) is a D-glucose 6-phosphate binding site. 425–426 (RR) serves as a coordination point for ATP. D-glucose 6-phosphate is bound by residues serine 449 and 532–536 (DLGGT). The tract at residues 521-655 (DGTENGDFLA…EFDLDVVAVV (135 aa)) is hexokinase small subdomain 2. Residue 532 to 537 (DLGGTN) coordinates ATP. Residues 603–604 (SF), 620–621 (TK), and 656–657 (ND) contribute to the D-glucose site. The tract at residues 656-895 (NDTVGTMMTC…CNVSFLLSED (240 aa)) is hexokinase large subdomain 2. Residues aspartate 657 and threonine 680 each contribute to the D-glucose 6-phosphate site. Threonine 680 serves as a coordination point for ATP. Residues 682–683 (SN), glutamate 708, and glutamate 742 contribute to the D-glucose site. Residues 747–748 (GM), 784–788 (TKFLS), and 863–867 (TLYKL) contribute to the ATP site. Residues 861–863 (DGT) and serine 897 each bind D-glucose 6-phosphate.

This sequence belongs to the hexokinase family. As to quaternary structure, monomer. Interacts with RABL2/RABL2A; binds preferentially to GTP-bound RABL2. Interacts with VDAC1. The HK1-VDAC1 complex interacts with ATF2. Interacts (via N-terminal spermatogenic cell-specific region) with PFKM (via C-terminus). Interacts with SMAD5. Isoform 2: Erythrocyte specific. Isoform 3: Testis-specific. Isoform 4: Testis-specific.

It is found in the mitochondrion outer membrane. It localises to the cytoplasm. The protein localises to the cytosol. It carries out the reaction a D-hexose + ATP = a D-hexose 6-phosphate + ADP + H(+). It catalyses the reaction D-fructose + ATP = D-fructose 6-phosphate + ADP + H(+). The catalysed reaction is D-glucose + ATP = D-glucose 6-phosphate + ADP + H(+). The enzyme catalyses D-mannose + ATP = D-mannose 6-phosphate + ADP + H(+). It carries out the reaction D-glucosamine + ATP = D-glucosamine 6-phosphate + ADP + H(+). Its pathway is carbohydrate metabolism; hexose metabolism. It participates in carbohydrate degradation; glycolysis; D-glyceraldehyde 3-phosphate and glycerone phosphate from D-glucose: step 1/4. Hexokinase is an allosteric enzyme inhibited by its product D-glucose 6-phosphate. Hexokinase activity is inhibited by N-acetyl-D-glucosamine. Functionally, catalyzes the phosphorylation of various hexoses, such as D-glucose, D-glucosamine, D-fructose, D-mannose and 2-deoxy-D-glucose, to hexose 6-phosphate (D-glucose 6-phosphate, D-glucosamine 6-phosphate, D-fructose 6-phosphate, D-mannose 6-phosphate and 2-deoxy-D-glucose 6-phosphate, respectively). Does not phosphorylate N-acetyl-D-glucosamine. Mediates the initial step of glycolysis by catalyzing phosphorylation of D-glucose to D-glucose 6-phosphate. Involved in innate immunity and inflammation by acting as a pattern recognition receptor for bacterial peptidoglycan. When released in the cytosol, N-acetyl-D-glucosamine component of bacterial peptidoglycan inhibits the hexokinase activity of HK1 and causes its dissociation from mitochondrial outer membrane, thereby activating the NLRP3 inflammasome. The polypeptide is Hexokinase-1 (Homo sapiens (Human)).